The primary structure comprises 356 residues: HTH-type transcriptional regulator AglR (356 aa).

An HTH lacI-type domain is found at 1 to 57 (MPVNLKQLAELLGLSQTTVSRALNGYPEVNAETRARVLEAVRETGYRPNRAAQRLAT). A DNA-binding region (H-T-H motif) is located at residues 5-24 (LKQLAELLGLSQTTVSRALN). Positions 337 to 356 (TGPAPDRSPLPNPSPQVGGA) are disordered.

Functionally, probable regulatory protein for the binding-protein-dependent transport system for alpha-glucosides such as sucrose, maltose and trehalose. This chain is HTH-type transcriptional regulator AglR (aglR), found in Rhizobium meliloti (strain 1021) (Ensifer meliloti).